We begin with the raw amino-acid sequence, 145 residues long: D-aminoacyl-tRNA deacylase (145 aa).

The Gly-cisPro motif, important for rejection of L-amino acids motif lies at 137–138 (GP).

Belongs to the DTD family. As to quaternary structure, homodimer.

It localises to the cytoplasm. It catalyses the reaction glycyl-tRNA(Ala) + H2O = tRNA(Ala) + glycine + H(+). It carries out the reaction a D-aminoacyl-tRNA + H2O = a tRNA + a D-alpha-amino acid + H(+). An aminoacyl-tRNA editing enzyme that deacylates mischarged D-aminoacyl-tRNAs. Also deacylates mischarged glycyl-tRNA(Ala), protecting cells against glycine mischarging by AlaRS. Acts via tRNA-based rather than protein-based catalysis; rejects L-amino acids rather than detecting D-amino acids in the active site. By recycling D-aminoacyl-tRNA to D-amino acids and free tRNA molecules, this enzyme counteracts the toxicity associated with the formation of D-aminoacyl-tRNA entities in vivo and helps enforce protein L-homochirality. This Pseudomonas syringae pv. tomato (strain ATCC BAA-871 / DC3000) protein is D-aminoacyl-tRNA deacylase.